Consider the following 113-residue polypeptide: Large ribosomal subunit protein uL22 (113 aa).

The protein belongs to the universal ribosomal protein uL22 family. As to quaternary structure, part of the 50S ribosomal subunit.

Its function is as follows. This protein binds specifically to 23S rRNA; its binding is stimulated by other ribosomal proteins, e.g. L4, L17, and L20. It is important during the early stages of 50S assembly. It makes multiple contacts with different domains of the 23S rRNA in the assembled 50S subunit and ribosome. The globular domain of the protein is located near the polypeptide exit tunnel on the outside of the subunit, while an extended beta-hairpin is found that lines the wall of the exit tunnel in the center of the 70S ribosome. The chain is Large ribosomal subunit protein uL22 from Desulforudis audaxviator (strain MP104C).